The chain runs to 232 residues: 5'-methylthioadenosine/S-adenosylhomocysteine nucleosidase (232 aa).

Residue glutamate 12 is the Proton acceptor of the active site. Residues glycine 78, isoleucine 152, and 173 to 174 (ME) each bind substrate. Aspartate 197 (proton donor) is an active-site residue.

It belongs to the PNP/UDP phosphorylase family. MtnN subfamily. In terms of assembly, homodimer.

The catalysed reaction is S-adenosyl-L-homocysteine + H2O = S-(5-deoxy-D-ribos-5-yl)-L-homocysteine + adenine. The enzyme catalyses S-methyl-5'-thioadenosine + H2O = 5-(methylsulfanyl)-D-ribose + adenine. It catalyses the reaction 5'-deoxyadenosine + H2O = 5-deoxy-D-ribose + adenine. It functions in the pathway amino-acid biosynthesis; L-methionine biosynthesis via salvage pathway; S-methyl-5-thio-alpha-D-ribose 1-phosphate from S-methyl-5'-thioadenosine (hydrolase route): step 1/2. Functionally, catalyzes the irreversible cleavage of the glycosidic bond in both 5'-methylthioadenosine (MTA) and S-adenosylhomocysteine (SAH/AdoHcy) to adenine and the corresponding thioribose, 5'-methylthioribose and S-ribosylhomocysteine, respectively. Also cleaves 5'-deoxyadenosine, a toxic by-product of radical S-adenosylmethionine (SAM) enzymes, into 5-deoxyribose and adenine. Thus, is required for in vivo function of the radical SAM enzymes biotin synthase and lipoic acid synthase, that are inhibited by 5'-deoxyadenosine accumulation. This Klebsiella pneumoniae (strain 342) protein is 5'-methylthioadenosine/S-adenosylhomocysteine nucleosidase.